Here is a 461-residue protein sequence, read N- to C-terminus: Cysteine--tRNA ligase (461 aa).

Cys-28 is a binding site for Zn(2+). The short motif at 30 to 40 (ITVYDLCHIGH) is the 'HIGH' region element. The Zn(2+) site is built by Cys-209, His-234, and Glu-238. The 'KMSKS' region motif lies at 266 to 270 (KMSKS). Lys-269 is a binding site for ATP.

It belongs to the class-I aminoacyl-tRNA synthetase family. In terms of assembly, monomer. Zn(2+) is required as a cofactor.

The protein localises to the cytoplasm. It catalyses the reaction tRNA(Cys) + L-cysteine + ATP = L-cysteinyl-tRNA(Cys) + AMP + diphosphate. The polypeptide is Cysteine--tRNA ligase (Salmonella agona (strain SL483)).